We begin with the raw amino-acid sequence, 126 residues long: Large ribosomal subunit protein bL12 (126 aa).

It belongs to the bacterial ribosomal protein bL12 family. Homodimer. Part of the ribosomal stalk of the 50S ribosomal subunit. Forms a multimeric L10(L12)X complex, where L10 forms an elongated spine to which 2 to 4 L12 dimers bind in a sequential fashion. Binds GTP-bound translation factors.

Functionally, forms part of the ribosomal stalk which helps the ribosome interact with GTP-bound translation factors. Is thus essential for accurate translation. This is Large ribosomal subunit protein bL12 from Caulobacter sp. (strain K31).